A 155-amino-acid chain; its full sequence is 6,7-dimethyl-8-ribityllumazine synthase (155 aa).

Residues Phe-23, 57 to 59, and 81 to 83 each bind 5-amino-6-(D-ribitylamino)uracil; these read AFE and AVI. 86–87 serves as a coordination point for (2S)-2-hydroxy-3-oxobutyl phosphate; sequence ST. His-89 functions as the Proton donor in the catalytic mechanism. Residue Phe-114 participates in 5-amino-6-(D-ribitylamino)uracil binding. Residue Arg-128 coordinates (2S)-2-hydroxy-3-oxobutyl phosphate.

The protein belongs to the DMRL synthase family.

It catalyses the reaction (2S)-2-hydroxy-3-oxobutyl phosphate + 5-amino-6-(D-ribitylamino)uracil = 6,7-dimethyl-8-(1-D-ribityl)lumazine + phosphate + 2 H2O + H(+). The protein operates within cofactor biosynthesis; riboflavin biosynthesis; riboflavin from 2-hydroxy-3-oxobutyl phosphate and 5-amino-6-(D-ribitylamino)uracil: step 1/2. Its function is as follows. Catalyzes the formation of 6,7-dimethyl-8-ribityllumazine by condensation of 5-amino-6-(D-ribitylamino)uracil with 3,4-dihydroxy-2-butanone 4-phosphate. This is the penultimate step in the biosynthesis of riboflavin. The sequence is that of 6,7-dimethyl-8-ribityllumazine synthase from Dehalococcoides mccartyi (strain ATCC BAA-2100 / JCM 16839 / KCTC 5957 / BAV1).